We begin with the raw amino-acid sequence, 334 residues long: Tetratricopeptide repeat protein 24 (334 aa).

TPR repeat units lie at residues 35–68, 72–105, 112–145, and 152–185; these read GPFY…CRQP, ATVL…HGSV, GRSF…AQDT, and WQAC…CQHE. Positions 220 to 258 are disordered; that stretch reads PGKLQTSRKAKTSARVQSSAEDAQESQWEGEASEGGHEK. The segment covering 233 to 246 has biased composition (polar residues); it reads ARVQSSAEDAQESQ.

The polypeptide is Tetratricopeptide repeat protein 24 (Ttc24) (Mus musculus (Mouse)).